The sequence spans 362 residues: Molybdopterin synthase catalytic subunit (362 aa).

Residues 101 to 102 (HR), lysine 117, and 124 to 126 (KKE) each bind substrate.

Belongs to the MoaE family. MOCS2B subfamily. In terms of assembly, heterotetramer; composed of 2 small (Mocs2A) and 2 large (Mocs2B) subunits.

It is found in the cytoplasm. The enzyme catalyses 2 [molybdopterin-synthase sulfur-carrier protein]-C-terminal-Gly-aminoethanethioate + cyclic pyranopterin phosphate + H2O = molybdopterin + 2 [molybdopterin-synthase sulfur-carrier protein]-C-terminal Gly-Gly + 2 H(+). It functions in the pathway cofactor biosynthesis; molybdopterin biosynthesis. Catalytic subunit of the molybdopterin synthase complex, a complex that catalyzes the conversion of precursor Z into molybdopterin. Acts by mediating the incorporation of 2 sulfur atoms from thiocarboxylated Mocs2A into precursor Z to generate a dithiolene group. The sequence is that of Molybdopterin synthase catalytic subunit from Drosophila grimshawi (Hawaiian fruit fly).